Reading from the N-terminus, the 219-residue chain is Pyridoxal 5'-phosphate synthase subunit PDX2 (219 aa).

52–54 (GES) contributes to the L-glutamine binding site. The active-site Nucleophile is the cysteine 87. L-glutamine-binding positions include arginine 121 and 153 to 154 (IR). Active-site charge relay system residues include histidine 196 and glutamate 198.

Belongs to the glutaminase PdxT/SNO family. In the presence of Pdx1, forms a dodecamer of heterodimers. Only shows activity in the heterodimer.

It is found in the cytoplasm. It catalyses the reaction aldehydo-D-ribose 5-phosphate + D-glyceraldehyde 3-phosphate + L-glutamine = pyridoxal 5'-phosphate + L-glutamate + phosphate + 3 H2O + H(+). The enzyme catalyses L-glutamine + H2O = L-glutamate + NH4(+). It participates in cofactor biosynthesis; pyridoxal 5'-phosphate biosynthesis. In terms of biological role, catalyzes the hydrolysis of glutamine to glutamate and ammonia as part of the biosynthesis of pyridoxal 5'-phosphate. The resulting ammonia molecule is channeled to the active site of Pdx1. This Plasmodium falciparum (isolate 3D7) protein is Pyridoxal 5'-phosphate synthase subunit PDX2.